We begin with the raw amino-acid sequence, 189 residues long: Protein GrpE (189 aa).

The segment at 1-37 is disordered; the sequence is MSDSSKEKKKKFADMVSRQKGDDQQSDNHKQTDDLNE. A compositionally biased stretch (basic and acidic residues) spans 17–33; that stretch reads SRQKGDDQQSDNHKQTD.

Belongs to the GrpE family. As to quaternary structure, homodimer.

The protein localises to the cytoplasm. Its function is as follows. Participates actively in the response to hyperosmotic and heat shock by preventing the aggregation of stress-denatured proteins, in association with DnaK and GrpE. It is the nucleotide exchange factor for DnaK and may function as a thermosensor. Unfolded proteins bind initially to DnaJ; upon interaction with the DnaJ-bound protein, DnaK hydrolyzes its bound ATP, resulting in the formation of a stable complex. GrpE releases ADP from DnaK; ATP binding to DnaK triggers the release of the substrate protein, thus completing the reaction cycle. Several rounds of ATP-dependent interactions between DnaJ, DnaK and GrpE are required for fully efficient folding. This chain is Protein GrpE, found in Wolbachia sp. subsp. Drosophila simulans (strain wRi).